Here is a 235-residue protein sequence, read N- to C-terminus: C-type lectin domain family 2 member D-related protein (235 aa).

The tract at residues 1 to 50 (MPSSAHLQDPPPHLSRTLTQDEEQTSLRQSSSCGPSTTSASASESLSGST) is disordered. The Cytoplasmic portion of the chain corresponds to 1 to 75 (MPSSAHLQDP…KIIPTESAAK (75 aa)). Low complexity predominate over residues 30 to 50 (SSSCGPSTTSASASESLSGST). The chain crosses the membrane as a helical; Signal-anchor for type II membrane protein span at residues 76 to 96 (LLCCYAVFMALTVVVIALSIA). Residues 97 to 235 (LSVKKTPQIS…KLNSYTSQCP (139 aa)) are Extracellular-facing. Residues 121-232 (FGNKCYYFNE…ICSKLNSYTS (112 aa)) enclose the C-type lectin domain. A glycan (N-linked (GlcNAc...) asparagine) is linked at Asn134.

The protein localises to the cell membrane. Lectin-type cell surface receptor. In Rattus norvegicus (Rat), this protein is C-type lectin domain family 2 member D-related protein.